Consider the following 686-residue polypeptide: Pollen receptor-like kinase 5 (686 aa).

The first 39 residues, 1-39 (MRNWEDPFTLACNTALKKNLPSCIFIIIFISVLCPVAMS), serve as a signal peptide directing secretion. The Extracellular portion of the chain corresponds to 40 to 283 (QVVVPDSDAD…GKKAGSFYTL (244 aa)). An N-linked (GlcNAc...) asparagine glycan is attached at asparagine 60. LRR repeat units follow at residues 112 to 135 (MKNLRTISFMNNNFNGPMPQVKRF), 136 to 159 (TSLKSLYLSNNRFSGEIPADAFLG), 161 to 184 (PLLKKILLANNAFRGTIPSSLASL), 185 to 208 (PMLLELRLNGNQFQGQIPSFQQKD), and 210 to 230 (KLASFENNDLDGPIPESLRNM). The chain crosses the membrane as a helical span at residues 284–304 (AIILIVIGIILVIIALVFCFV). Residues 305–686 (QSRRRNFLSA…DDDFGFSMNR (382 aa)) are Cytoplasmic-facing. Over residues 328-339 (NYHQSTNKNNKP) the composition is skewed to polar residues. The disordered stretch occupies residues 328–355 (NYHQSTNKNNKPAESVNHTRRGSMPDPG). In terms of domain architecture, Protein kinase spans 375–648 (RASAEVLGSG…REVVEMVEML (274 aa)). Serine 377 carries the post-translational modification Phosphoserine. ATP contacts are provided by residues 381–389 (LGSGTFGAS) and lysine 403. A phosphoserine mark is found at serine 455 and serine 458. Threonine 472 is modified (phosphothreonine). A Phosphotyrosine modification is found at tyrosine 542. Residue serine 545 is modified to Phosphoserine.

This sequence belongs to the protein kinase superfamily. Ser/Thr protein kinase family. As to quaternary structure, interacts with the GRI peptide. Expressed in pollen and/or in flowers. Detected at low levels in leaves.

Its subcellular location is the cell membrane. It catalyses the reaction L-seryl-[protein] + ATP = O-phospho-L-seryl-[protein] + ADP + H(+). It carries out the reaction L-threonyl-[protein] + ATP = O-phospho-L-threonyl-[protein] + ADP + H(+). Functionally, receptor-like kinase involved in the control of pollen germination and pollen tube polar growth. The extracellular domain serves as a sensor for peptides derived from GRI. May act as a downstream element for ROS-dependent cell death induced by GRI. This is Pollen receptor-like kinase 5 from Arabidopsis thaliana (Mouse-ear cress).